The primary structure comprises 83 residues: Subtilisin-chymotrypsin inhibitor CI-1B (83 aa).

A disordered region spans residues 1 to 28 (MRSMEGSVPKYPEPTEGSIGASGAKRSW).

It belongs to the protease inhibitor I13 (potato type I serine protease inhibitor) family.

Its function is as follows. Inhibits both subtilisin and chymotrypsin. This chain is Subtilisin-chymotrypsin inhibitor CI-1B, found in Hordeum vulgare (Barley).